Consider the following 344-residue polypeptide: S-adenosylmethionine:tRNA ribosyltransferase-isomerase (344 aa).

Belongs to the QueA family. As to quaternary structure, monomer.

It is found in the cytoplasm. The catalysed reaction is 7-aminomethyl-7-carbaguanosine(34) in tRNA + S-adenosyl-L-methionine = epoxyqueuosine(34) in tRNA + adenine + L-methionine + 2 H(+). The protein operates within tRNA modification; tRNA-queuosine biosynthesis. Its function is as follows. Transfers and isomerizes the ribose moiety from AdoMet to the 7-aminomethyl group of 7-deazaguanine (preQ1-tRNA) to give epoxyqueuosine (oQ-tRNA). In Heliobacterium modesticaldum (strain ATCC 51547 / Ice1), this protein is S-adenosylmethionine:tRNA ribosyltransferase-isomerase.